Reading from the N-terminus, the 129-residue chain is D-ribose pyranase 2 (129 aa).

Histidine 20 acts as the Proton donor in catalysis. Substrate contacts are provided by residues aspartate 28, histidine 96, and 118-120; that span reads YAN.

It belongs to the RbsD / FucU family. RbsD subfamily. In terms of assembly, homodecamer.

The protein localises to the cytoplasm. It carries out the reaction beta-D-ribopyranose = beta-D-ribofuranose. The protein operates within carbohydrate metabolism; D-ribose degradation; D-ribose 5-phosphate from beta-D-ribopyranose: step 1/2. In terms of biological role, catalyzes the interconversion of beta-pyran and beta-furan forms of D-ribose. This is D-ribose pyranase 2 from Streptomyces griseus subsp. griseus (strain JCM 4626 / CBS 651.72 / NBRC 13350 / KCC S-0626 / ISP 5235).